A 196-amino-acid polypeptide reads, in one-letter code: MWFMYLLSWLSLFIQVAFITLAVAAGLYYLAELIEEYTVATSRIIKYMIWFSTAVLIGLYVFERFPTSMIGVGLFTNLVYFGLLQTFPFIMLTSPNFILSCGLVVVNHYLACQFFAEEYYPFSEVLAYFTFCLWIIPFAFFVSLSAGENVLPSTMQPGDDVVSNYFTKGKRGKRLGILVVFSFIKEAILPSRQKIY.

Helical transmembrane passes span 3-23 (FMYL…TLAV), 42-62 (SRII…LYVF), 70-90 (IGVG…FPFI), 97-117 (FILS…FFAE), and 125-145 (VLAY…VSLS).

The protein belongs to the SVP26 family.

Its subcellular location is the membrane. This is Protein TEX261 (TEX261) from Pongo abelii (Sumatran orangutan).